Reading from the N-terminus, the 99-residue chain is Integration host factor subunit alpha (99 aa).

It belongs to the bacterial histone-like protein family. In terms of assembly, heterodimer of an alpha and a beta chain.

In terms of biological role, this protein is one of the two subunits of integration host factor, a specific DNA-binding protein that functions in genetic recombination as well as in transcriptional and translational control. The protein is Integration host factor subunit alpha of Alteromonas mediterranea (strain DSM 17117 / CIP 110805 / LMG 28347 / Deep ecotype).